Here is a 357-residue protein sequence, read N- to C-terminus: Crh-like protein 1 (357 aa).

Residues 1–17 form the signal peptide; the sequence is MMLPLLAVSAFASLGAA. The GH16 domain occupies 20–220; that stretch reads YTSCNPTNSL…WAGGETDYDE (201 aa). 2 N-linked (GlcNAc...) asparagine glycosylation sites follow: Asn-52 and Asn-92. The active-site Nucleophile is the Glu-109. Glu-113 functions as the Proton donor in the catalytic mechanism. Glu-113 is a binding site for chitin. Asn-131 is a glycosylation site (N-linked (GlcNAc...) asparagine). Chitin is bound by residues Lys-193, Trp-197, and Thr-208. 2 N-linked (GlcNAc...) asparagine glycosylation sites follow: Asn-242 and Asn-257. Gly-326 carries GPI-anchor amidated glycine lipidation. Residues 327–357 constitute a propeptide, removed in mature form; sequence SASAVFTGAAVTNLPSFFFTVFFALAIALAF. Residues 337 to 357 traverse the membrane as a helical segment; it reads VTNLPSFFFTVFFALAIALAF.

It belongs to the glycosyl hydrolase 16 family. CRH1 subfamily. The GPI-like anchor contains a phosphoceramide lipid group. The anchor position has not been determined.

Its subcellular location is the cell membrane. The protein localises to the secreted. The protein resides in the cell wall. It carries out the reaction Random endo-hydrolysis of N-acetyl-beta-D-glucosaminide (1-&gt;4)-beta-linkages in chitin and chitodextrins.. Dual chitinase/transglycosylase that plays a role in cell wall architecture. Chitinase and transglycosylase activities are coupled. Required for the polysaccharide cross-linking at the septa and the cell wall. More specifically, transfers chitin to 1,6-beta-glucan in the cell wall. The sequence is that of Crh-like protein 1 from Aspergillus fumigatus (strain ATCC MYA-4609 / CBS 101355 / FGSC A1100 / Af293) (Neosartorya fumigata).